The following is a 170-amino-acid chain: UPF0260 protein RPE_1881 (170 aa).

The protein belongs to the UPF0260 family.

The chain is UPF0260 protein RPE_1881 from Rhodopseudomonas palustris (strain BisA53).